The sequence spans 167 residues: Leptin (167 aa).

The signal sequence occupies residues 1–21 (MYWRTLWGFLWLWPYLFYIQA). An intrachain disulfide couples C117 to C167.

It belongs to the leptin family.

Its subcellular location is the secreted. Key player in the regulation of energy balance and body weight control. Once released into the circulation, has central and peripheral effects by binding LEPR, found in many tissues, which results in the activation of several major signaling pathways. In the hypothalamus, acts as an appetite-regulating factor that induces a decrease in food intake and an increase in energy consumption by inducing anorexinogenic factors and suppressing orexigenic neuropeptides, also regulates bone mass and secretion of hypothalamo-pituitary-adrenal hormones. In the periphery, increases basal metabolism, influences reproductive function, regulates pancreatic beta-cell function and insulin secretion, is pro-angiogenic for endothelial cell and affects innate and adaptive immunity. In the arcuate nucleus of the hypothalamus, activates by depolarization POMC neurons inducing FOS and SOCS3 expression to release anorexigenic peptides and inhibits by hyperpolarization NPY neurons inducing SOCS3 with a consequent reduction on release of orexigenic peptides. In addition to its known satiety inducing effect, has a modulatory role in nutrient absorption. In the intestine, reduces glucose absorption by enterocytes by activating PKC and leading to a sequential activation of p38, PI3K and ERK signaling pathways which exerts an inhibitory effect on glucose absorption. Acts as a growth factor on certain tissues, through the activation of different signaling pathways increases expression of genes involved in cell cycle regulation such as CCND1, via JAK2-STAT3 pathway, or VEGFA, via MAPK1/3 and PI3K-AKT1 pathways. May also play an apoptotic role via JAK2-STAT3 pathway and up-regulation of BIRC5 expression. Pro-angiogenic, has mitogenic activity on vascular endothelial cells and plays a role in matrix remodeling by regulating the expression of matrix metalloproteinases (MMPs) and tissue inhibitors of metalloproteinases (TIMPs). In innate immunity, modulates the activity and function of neutrophils by increasing chemotaxis and the secretion of oxygen radicals. Increases phagocytosis by macrophages and enhances secretion of pro-inflammatory mediators. Increases cytotoxic ability of NK cells. Plays a pro-inflammatory role, in synergy with IL1B, by inducing NOS2 which promotes the production of IL6, IL8 and Prostaglandin E2, through a signaling pathway that involves JAK2, PI3K, MAP2K1/MEK1 and MAPK14/p38. In adaptive immunity, promotes the switch of memory T-cells towards T helper-1 cell immune responses. Increases CD4(+)CD25(-) T-cell proliferation and reduces autophagy during TCR (T-cell receptor) stimulation, through MTOR signaling pathway activation and BCL2 up-regulation. In Macaca mulatta (Rhesus macaque), this protein is Leptin (LEP).